Reading from the N-terminus, the 534-residue chain is MEVLGFLSPELNGPMVTMALAVVLLALLKWYSTSAFSRLEKLGIRHPKPSPFIGNLTFFRQGFWESHMELRKQYGPLSGYYLGRRMIVVISDPDMIKQVLAEKFSNFTNRMATGLESKPVADSILFLRDKRWEEVRSVLTSAFSPKKLNKLTPLISQACDLLLAHLERYAESGDAFDIQRCYCCYTTDVVASVAFGTQVNSSEEPEHPFVKHCRRFFAFSVPRLILVLILSFPSIMVPLARILPNKKRDEVNGFFNKLIRNVIALRDQQAAEERRQDFLQMVLDLRHSAPSVGVENFDIVRQAFSSAKGCPADPSQPHLPRPLSKPLTVDEVVGQAFLFLIAGYEIITNTLSFVTYLLATNPDCQEKLLREVDDFSKKHPSPEHCSLQQGLPYLDMVLSETLRMYPPAFRFTREAARDCEVLGQRIPAGTVLEVAVGALHHDPKHWPHPETFDPERFTAEAQRLQQPFTYLPFGAGPRSCLGVQLGLLEIKLTLLHILRKFRFEACPETQVPLQLESKSALSPKNGVYIRIVPR.

Residues 1–10 (MEVLGFLSPE) are Cytoplasmic-facing. Residues 11 to 31 (LNGPMVTMALAVVLLALLKWY) form a helical membrane-spanning segment. At 32–75 (STSAFSRLEKLGIRHPKPSPFIGNLTFFRQGFWESHMELRKQYG) the chain is on the lumenal side. The helical transmembrane segment at 76 to 96 (PLSGYYLGRRMIVVISDPDMI) threads the bilayer. Over 97–223 (KQVLAEKFSN…RRFFAFSVPR (127 aa)) the chain is Cytoplasmic. The chain crosses the membrane as a helical span at residues 224–244 (LILVLILSFPSIMVPLARILP). Over 245–336 (NKKRDEVNGF…LTVDEVVGQA (92 aa)) the chain is Lumenal. Residues 337–357 (FLFLIAGYEIITNTLSFVTYL) form a helical membrane-spanning segment. Residues 358 to 534 (LATNPDCQEK…NGVYIRIVPR (177 aa)) lie on the Cytoplasmic side of the membrane. Residue Cys480 participates in heme binding.

The protein belongs to the cytochrome P450 family. As to quaternary structure, monomer. Requires heme as cofactor. In terms of tissue distribution, expressed in lung, kidney and thymus.

The protein resides in the endoplasmic reticulum membrane. It catalyses the reaction prostaglandin H2 = thromboxane A2. It carries out the reaction prostaglandin H2 = (12S)-hydroxy-(5Z,8E,10E)-heptadecatrienoate + malonaldehyde. The enzyme catalyses a hydroperoxyeicosatetraenoate = an oxoeicosatetraenoate + H2O. The catalysed reaction is (15S)-hydroperoxy-(5Z,8Z,11Z,13E)-eicosatetraenoate = 15-oxo-(5Z,8Z,11Z,13E)-eicosatetraenoate + H2O. It catalyses the reaction (15S)-hydroperoxy-(5Z,8Z,11Z,13E)-eicosatetraenoate + AH2 = (15S)-hydroxy-(5Z,8Z,11Z,13E)-eicosatetraenoate + A + H2O. In terms of biological role, catalyzes the conversion of prostaglandin H2 (PGH2) to thromboxane A2 (TXA2), a potent inducer of blood vessel constriction and platelet aggregation. Also cleaves PGH2 to 12-hydroxy-heptadecatrienoicacid (12-HHT) and malondialdehyde, which is known to act as a mediator of DNA damage. 12-HHT and malondialdehyde are formed stoichiometrically in the same amounts as TXA2. Additionally, displays dehydratase activity, toward (15S)-hydroperoxy-(5Z,8Z,11Z,13E)-eicosatetraenoate (15(S)-HPETE) producing 15-KETE and 15-HETE. In Sus scrofa (Pig), this protein is Thromboxane-A synthase (TBXAS1).